The chain runs to 138 residues: ATP synthase epsilon chain (138 aa).

This sequence belongs to the ATPase epsilon chain family. As to quaternary structure, F-type ATPases have 2 components, CF(1) - the catalytic core - and CF(0) - the membrane proton channel. CF(1) has five subunits: alpha(3), beta(3), gamma(1), delta(1), epsilon(1). CF(0) has three main subunits: a, b and c.

Its subcellular location is the cellular thylakoid membrane. In terms of biological role, produces ATP from ADP in the presence of a proton gradient across the membrane. This Cyanothece sp. (strain PCC 7425 / ATCC 29141) protein is ATP synthase epsilon chain.